A 114-amino-acid polypeptide reads, in one-letter code: UPF0102 protein Shew_0226 (114 aa).

Belongs to the UPF0102 family.

The chain is UPF0102 protein Shew_0226 from Shewanella loihica (strain ATCC BAA-1088 / PV-4).